A 274-amino-acid polypeptide reads, in one-letter code: MTLQEEIIKELGVKPIIDPKEEIRVSVDFLKDYLKKYPFIKSFVLGISGGQDSSLAGRLAQIAIEEMRQETADASYKFVAVRLPFGVQADEEDAQRALAFIKPDVSLAVNIKAAVEGQVAALNEAGVEVSDFNKGNIKARQRMITQYAVAGQYQGAVLGTDHAAENITGFFTKFGDGGADLLPLFRLNKRQGKALLAELGADPAIYEKVPTADLEEGKPGLADEIALGVTYNDIDDYTEGKVISDDAKAKIEAWWNKTQHKRHLPISIFDDFWK.

46–53 is a binding site for ATP; sequence GISGGQDS. A Mg(2+)-binding site is contributed by aspartate 52. Arginine 140 is a deamido-NAD(+) binding site. Threonine 160 contacts ATP. Position 165 (glutamate 165) interacts with Mg(2+). Positions 173 and 180 each coordinate deamido-NAD(+). Lysine 189 and threonine 211 together coordinate ATP. A deamido-NAD(+)-binding site is contributed by 260-261; the sequence is HK.

Belongs to the NAD synthetase family. In terms of assembly, homodimer.

The catalysed reaction is deamido-NAD(+) + NH4(+) + ATP = AMP + diphosphate + NAD(+) + H(+). Its pathway is cofactor biosynthesis; NAD(+) biosynthesis; NAD(+) from deamido-NAD(+) (ammonia route): step 1/1. Catalyzes the ATP-dependent amidation of deamido-NAD to form NAD. Uses ammonia as a nitrogen source. This chain is NH(3)-dependent NAD(+) synthetase, found in Lactococcus lactis subsp. cremoris (strain MG1363).